The chain runs to 318 residues: Taste receptor type 2 member 14 (318 aa).

Residues 1 to 7 (MGGVIKN) are Extracellular-facing. Residues 8–28 (ISTFVLIVEFIIGNLGNSFIA) traverse the membrane as a helical segment. Residues 29–55 (LVNCIDWVKRRKISLVDQLLTALAISR) lie on the Cytoplasmic side of the membrane. A helical membrane pass occupies residues 56–76 (ISLVWLIFGSWCVSAFFPALF). At 77–87 (ATEKMFRMLTN) the chain is on the extracellular side. Positions 86 and 89 each coordinate cholesterol. The chain crosses the membrane as a helical span at residues 88 to 108 (IWAVTNHFSVWLATGLGTFYF). At 109 to 129 (LKIANFSNSIFIYLKWRVKKV) the chain is on the cytoplasmic side. The chain crosses the membrane as a helical span at residues 130–150 (VLVLLLVTSVFLFLNIALINI). Residues 151 to 184 (HINASINGYGGNKTCSSDSNDFTRFSSLIALTSS) are Extracellular-facing. Residues Asn153 and Asn162 are each glycosylated (N-linked (GlcNAc...) asparagine). Position 180 (Ala180) interacts with cholesterol. The chain crosses the membrane as a helical span at residues 185–205 (VFIFIPFILSLAIFLLLTFSL). The Cytoplasmic segment spans residues 206-232 (WKHCKKMQHTVKASGDASTKAHRGVMQ). Residues 233–253 (TVIAFLLLYPIFSLSFFIAVW) traverse the membrane as a helical segment. Topologically, residues 254-261 (TSGWLEEN) are extracellular. A helical membrane pass occupies residues 262-282 (LIILSQVMGMAYPSCHSCILI). Cholesterol-binding residues include Leu265 and Val268. The Cytoplasmic segment spans residues 283 to 317 (LGNKKLRQASLSVLWWLKYRFKDGEPSGHKGFRES).

The protein belongs to the G-protein coupled receptor T2R family. In terms of assembly, core component of the TAS2R14-GNAI1 complex, consisting of TAS2R14, GNAI1, GNB1 and GNG2; within the complex interacts with GNAI1. Core component of the TAS2R14-GNAT3 complex, consisting of TAS2R14, GNAT3, GNB1 and GNG2; within the complex interacts with GNAT3. Core component of the TAS2R14-GNAS2 complex, consisting of TAS2R14, GNAS2, GNB1 and GNG2; within the complex interacts with GNAS2.

It localises to the membrane. The catalysed reaction is Ca(2+)(in) = Ca(2+)(out). The enzyme catalyses 3',5'-cyclic AMP(in) = 3',5'-cyclic AMP(out). Its activity is regulated as follows. Basal activity is enhanced by binding to bitter tastants, such as flufenamic acid and aristolochic acid. Regulated by cholesterol in a concentration-dependent manner. Gustducin-linked G-protein coupled receptor that plays a role in the perception of bitterness. The activity of this receptor stimulates GNAT3, activating the gustducin G-protein pathway. Likely plays a role in sensing the chemical composition of the gastrointestinal content and other extra-oral tissues via the inhibitory G-protein pathways. In Pongo pygmaeus (Bornean orangutan), this protein is Taste receptor type 2 member 14 (TAS2R14).